Consider the following 213-residue polypeptide: mRNA-decapping protein OPG121 (213 aa).

Positions 16 and 50 each coordinate N(7)-methyl-GTP. Residues 30 to 209 (KDTHVFAACI…EYLSYIYNML (180 aa)) form the Nudix hydrolase domain. The short motif at 111–132 (GKLDKKESIKDCLRRELKEESD) is the Nudix box element. 5 residues coordinate Mg(2+): E117, E126, E130, D151, and E183. Catalysis depends on E126, which acts as the Nucleophile. Residue D151 coordinates N(7)-methyl-GTP.

This sequence belongs to the Nudix hydrolase family. It depends on Mg(2+) as a cofactor. Mn(2+) is required as a cofactor.

The enzyme catalyses a 5'-end (N(7)-methyl 5'-triphosphoguanosine)-guanosine in mRNA + H2O = a 5'-end phospho-guanosine in mRNA + N(7)-methyl-GDP + 2 H(+). Functionally, decapping enzyme that remove the protective 5'-cap from both host and viral mRNAs to commit transcripts for decay by the cellular exonuclease XRN1. Accelerates viral and cellular mRNA turnover to eliminate competing host mRNAs and allow stage-specific synthesis of viral proteins. Acceleration of the turnover of cellular transcripts may even promote the shutoff of host protein synthesis. The sequence is that of mRNA-decapping protein OPG121 (OPG121) from Homo sapiens (Human).